The following is a 783-amino-acid chain: BMP/retinoic acid-inducible neural-specific protein 2 (783 aa).

The first 33 residues, M1–A33, serve as a signal peptide directing secretion. The 197-residue stretch at R85–T281 folds into the MACPF domain. Residues N185, N354, N473, N579, N626, and N658 are each glycosylated (N-linked (GlcNAc...) asparagine).

The protein belongs to the BRINP family. In terms of tissue distribution, weakly expressed in embryonic stem (ES) cells. Strongly expressed in ES-derived neural stem cells (NSCs).

It localises to the secreted. Functionally, inhibits neuronal cell proliferation by negative regulation of the cell cycle transition. The polypeptide is BMP/retinoic acid-inducible neural-specific protein 2 (Brinp2) (Mus musculus (Mouse)).